The sequence spans 292 residues: Ribosomal protein L11 methyltransferase (292 aa).

Thr-144, Gly-165, Asp-187, and Asn-229 together coordinate S-adenosyl-L-methionine.

Belongs to the methyltransferase superfamily. PrmA family.

The protein resides in the cytoplasm. It carries out the reaction L-lysyl-[protein] + 3 S-adenosyl-L-methionine = N(6),N(6),N(6)-trimethyl-L-lysyl-[protein] + 3 S-adenosyl-L-homocysteine + 3 H(+). Functionally, methylates ribosomal protein L11. The sequence is that of Ribosomal protein L11 methyltransferase from Saccharophagus degradans (strain 2-40 / ATCC 43961 / DSM 17024).